A 554-amino-acid chain; its full sequence is Eukaryotic translation initiation factor 3 subunit D-2 (554 aa).

The tract at residues 116 to 149 (RGNAAIGGGQGGAGGTGGAGVGNKYGKGRDMRRG) is disordered. The segment covering 120–140 (AIGGGQGGAGGTGGAGVGNKY) has biased composition (gly residues). The RNA gate stretch occupies residues 291–305 (QFDLLTVNETALEPP). The segment at 532–554 (FDSDGNDDEETSDDRPFLKSLGN) is disordered.

It belongs to the eIF-3 subunit D family. As to quaternary structure, component of the eukaryotic translation initiation factor 3 (eIF-3) complex. The eIF-3 complex interacts with pix.

Its subcellular location is the cytoplasm. Functionally, mRNA cap-binding component of the eukaryotic translation initiation factor 3 (eIF-3) complex, which is involved in protein synthesis of a specialized repertoire of mRNAs and, together with other initiation factors, stimulates binding of mRNA and methionyl-tRNAi to the 40S ribosome. The eIF-3 complex specifically targets and initiates translation of a subset of mRNAs involved in cell proliferation. In the eIF-3 complex, eif3d specifically recognizes and binds the 7-methylguanosine cap of a subset of mRNAs. The chain is Eukaryotic translation initiation factor 3 subunit D-2 from Drosophila virilis (Fruit fly).